An 878-amino-acid chain; its full sequence is Multiple C2 and transmembrane domain-containing protein 2 (878 aa).

Disordered stretches follow at residues 20-40 (LINL…DLRV) and 143-178 (KPSL…ESTL). The span at 149–161 (DAPEEHDKTHGND) shows a compositional bias: basic and acidic residues. C2 domains are found at residues 177–292 (TLGE…EHIL), 334–452 (SKSS…CLEL), and 486–607 (PSER…CYVL). Aspartate 210, aspartate 216, aspartate 263, aspartate 265, and aspartate 270 together coordinate Ca(2+). Residues aspartate 525, aspartate 531, aspartate 577, aspartate 579, and aspartate 585 each coordinate Ca(2+). A helical membrane pass occupies residues 694 to 714 (FVVFLVTVWNFELYMIPLALL). The tract at residues 728–752 (KASSTQDSQESTDVEEEGKEEEKES) is disordered. The span at 737–746 (ESTDVEEEGK) shows a compositional bias: acidic residues. Residues 794-814 (PFLSLLACLILAITTVILYFI) form a helical membrane-spanning segment.

This sequence belongs to the MCTP family. Ca(2+) is required as a cofactor.

Its subcellular location is the membrane. Its function is as follows. Might play a role in the development of cardiac outflow tract. The polypeptide is Multiple C2 and transmembrane domain-containing protein 2 (Mctp2) (Mus musculus (Mouse)).